A 254-amino-acid polypeptide reads, in one-letter code: Cell division protein DivIB (254 aa).

The Cytoplasmic segment spans residues 1 to 21 (MPNAQIPVLKKNRTKKRTSRK). The helical transmembrane segment at 22-42 (IAILLILLFIVLLAVLFFRSS) threads the bilayer. The Extracellular segment spans residues 43–254 (LSRVSEIRFD…EEGQEKDTTQ (212 aa)). Residues 44–112 (SRVSEIRFDG…GIIAIHIKEF (69 aa)) form the POTRA domain.

It belongs to the FtsQ/DivIB family. DivIB subfamily.

It is found in the cell membrane. Cell division protein that may be involved in stabilizing or promoting the assembly of the division complex. This chain is Cell division protein DivIB, found in Paenibacillus polymyxa (strain E681).